The chain runs to 433 residues: tRNA modification GTPase MnmE (433 aa).

The (6S)-5-formyl-5,6,7,8-tetrahydrofolate site is built by R24, E86, and K125. The region spanning 218–363 is the TrmE-type G domain; sequence GARLALIGAP…LKEALREALL (146 aa). N228 is a binding site for K(+). Residues 228–233, 247–253, and 272–275 each bind GTP; these read NAGKSS, SPIPGTT, and DTAG. S232 contacts Mg(2+). Positions 247, 249, and 252 each coordinate K(+). Residue T253 coordinates Mg(2+). K433 is a (6S)-5-formyl-5,6,7,8-tetrahydrofolate binding site.

This sequence belongs to the TRAFAC class TrmE-Era-EngA-EngB-Septin-like GTPase superfamily. TrmE GTPase family. In terms of assembly, homodimer. Heterotetramer of two MnmE and two MnmG subunits. K(+) is required as a cofactor.

It is found in the cytoplasm. Functionally, exhibits a very high intrinsic GTPase hydrolysis rate. Involved in the addition of a carboxymethylaminomethyl (cmnm) group at the wobble position (U34) of certain tRNAs, forming tRNA-cmnm(5)s(2)U34. The chain is tRNA modification GTPase MnmE from Thermus thermophilus (strain ATCC BAA-163 / DSM 7039 / HB27).